The following is a 315-amino-acid chain: Phosphatidylglycerol--prolipoprotein diacylglyceryl transferase (315 aa).

The next 2 helical transmembrane spans lie at 19–39 (FTIH…VWIL) and 93–113 (VWEG…VAFL). Arg-141 serves as a coordination point for a 1,2-diacyl-sn-glycero-3-phospho-(1'-sn-glycerol). The next 2 helical transmembrane spans lie at 188–208 (LFHP…ALII) and 256–276 (VWTA…LYQY).

The protein belongs to the Lgt family.

Its subcellular location is the cell membrane. It catalyses the reaction L-cysteinyl-[prolipoprotein] + a 1,2-diacyl-sn-glycero-3-phospho-(1'-sn-glycerol) = an S-1,2-diacyl-sn-glyceryl-L-cysteinyl-[prolipoprotein] + sn-glycerol 1-phosphate + H(+). The protein operates within protein modification; lipoprotein biosynthesis (diacylglyceryl transfer). In terms of biological role, catalyzes the transfer of the diacylglyceryl group from phosphatidylglycerol to the sulfhydryl group of the N-terminal cysteine of a prolipoprotein, the first step in the formation of mature lipoproteins. This is Phosphatidylglycerol--prolipoprotein diacylglyceryl transferase from Bifidobacterium longum (strain DJO10A).